We begin with the raw amino-acid sequence, 175 residues long: Small ribosomal subunit protein mS38 (175 aa).

It belongs to the mitochondrion-specific ribosomal protein mS38 family. Component of the mitochondrial small ribosomal subunit (mt-SSU). Mature yeast 74S mitochondrial ribosomes consist of a small (37S) and a large (54S) subunit. The 37S small subunit contains a 15S ribosomal RNA (15S mt-rRNA) and at least 32 different proteins. The 54S large subunit contains a 21S rRNA (21S mt-rRNA) and at least 45 different proteins.

The protein resides in the mitochondrion. Its subcellular location is the mitochondrion inner membrane. Functionally, component of the mitochondrial ribosome (mitoribosome), a dedicated translation machinery responsible for the synthesis of mitochondrial genome-encoded proteins, including at least some of the essential transmembrane subunits of the mitochondrial respiratory chain. The mitoribosomes are attached to the mitochondrial inner membrane and translation products are cotranslationally integrated into the membrane. mS38 is also involved in the splicing of the COX1 mRNA. The chain is Small ribosomal subunit protein mS38 (cox24) from Schizosaccharomyces pombe (strain 972 / ATCC 24843) (Fission yeast).